Here is a 430-residue protein sequence, read N- to C-terminus: Putative membrane fusion protein SilB (430 aa).

An N-terminal signal peptide occupies residues 1–28 (MASLKIKYAAIIISSLIAGGLISVTAWQ). The tract at residues 407–430 (RHPEKTENSMPAMSEQPVNMHSGH) is disordered. Residues 414-430 (NSMPAMSEQPVNMHSGH) are compositionally biased toward polar residues.

This sequence belongs to the membrane fusion protein (MFP) (TC 8.A.1) family.

Functionally, component of the sil cation efflux system that confers resistance to silver. May be part of a three-component cation/proton antiporter. The sequence is that of Putative membrane fusion protein SilB (silB) from Salmonella typhimurium.